The primary structure comprises 390 residues: Elongation factor Ts 2, mitochondrial (390 aa).

A mitochondrion-targeting transit peptide spans 1–24 (MMIFSTAVLRLCATSRIGAVTKRA). Residues 30–40 (SSASSSSSSSS) show a composition bias toward low complexity. The interval 30-54 (SSASSSSSSSSPTQSMPPQRYTHHQ) is disordered.

It belongs to the EF-Ts family.

It is found in the mitochondrion. Associates with the EF-Tu.GDP complex and induces the exchange of GDP to GTP. It remains bound to the aminoacyl-tRNA.EF-Tu.GTP complex up to the GTP hydrolysis stage on the ribosome. This is Elongation factor Ts 2, mitochondrial from Thalassiosira pseudonana (Marine diatom).